The sequence spans 424 residues: CinA-like protein (424 aa).

It belongs to the CinA family.

This is CinA-like protein from Shewanella loihica (strain ATCC BAA-1088 / PV-4).